A 754-amino-acid chain; its full sequence is Phosphoinositide 3-kinase regulatory subunit 6 (754 aa).

The segment at 343–363 (ERDLPTGADELPAPGSPEMER) is disordered.

Heterodimer of a catalytic subunit (PIK3CG) and a regulatory (PIK3R6) subunit. The binding of PIK3R6 to PIK3CG may exclude the binding of PIK3R5 to PIK3CG. Interacts with beta-gamma G protein dimers. Interacts with PDE3B and RAPGEF3; form a signaling complex that regulates phosphatidylinositol 3-kinase gamma in angiogenesis.

The protein resides in the cytoplasm. The protein localises to the cell membrane. Its function is as follows. Regulatory subunit of the PI3K gamma complex. Acts as an adapter to drive activation of PIK3CG by beta-gamma G protein dimers. The PIK3CG:PIK3R6 heterodimer is much less sensitive to beta-gamma G protein dimers than PIK3CG:PIK3R5 and its membrane recruitment and beta-gamma G protein dimer-dependent activation requires HRAS bound to PIK3CG. Recruits of the PI3K gamma complex to a PDE3B:RAPGEF3 signaling complex involved in angiogenesis; signaling seems to involve RRAS. The protein is Phosphoinositide 3-kinase regulatory subunit 6 (PIK3R6) of Homo sapiens (Human).